A 337-amino-acid chain; its full sequence is L-Ala-D/L-amino acid epimerase (337 aa).

Residues threonine 129 and 151–153 (KIK) contribute to the substrate site. Mg(2+)-binding residues include aspartate 177, glutamate 203, and aspartate 228. Substrate is bound by residues lysine 250 and 300–302 (DMD).

Belongs to the mandelate racemase/muconate lactonizing enzyme family. Mg(2+) is required as a cofactor.

Functionally, broad specificity dipeptide epimerase. Catalyzes the epimerization of L-Ala-L-Ala, L-Ala-L-Glu, L-Ala-L-Ser, L-Ala-L-Thr and L-Ala-L-Met (in vitro). This Maribacter sp. (strain HTCC2170 / KCCM 42371) protein is L-Ala-D/L-amino acid epimerase.